Here is a 236-residue protein sequence, read N- to C-terminus: DNA repair protein RecO (236 aa).

It belongs to the RecO family.

Involved in DNA repair and RecF pathway recombination. This Haemophilus influenzae (strain 86-028NP) protein is DNA repair protein RecO.